Reading from the N-terminus, the 507-residue chain is Maturase K (507 aa).

The protein belongs to the intron maturase 2 family. MatK subfamily.

It is found in the plastid. It localises to the chloroplast. Functionally, usually encoded in the trnK tRNA gene intron. Probably assists in splicing its own and other chloroplast group II introns. In Umbellularia californica (California bay laurel), this protein is Maturase K.